The sequence spans 352 residues: MDYQVSSPTYDIDYYTSEPCQKINVKQIAARLLPPLYSLVFIFGFVGNILVVLILINCKRLKSMTDIYLLNLAISDLLFLLTVPFWAHYAAAQWDFGNIMCQLLTGLYFIGFFSGIFFIILLTIDRYLAIVHAVFALKARTVTFGVVTSVITWVVAVFASLPGIIFTRSQREGLHYTCSSHFPYSQYQFWKNFRTLKIVILGLVLPLLVMVICYSGILKTLLRCRNEKKRHRAVRLIFTIMIVYFLFWAPYNIVLLLNTFQEFFGLNNCSSSNRLDQAMQVTETLGMTHCCINPIIYAFVGEKFRNYLLVFFQKHIAKRFCKCCSIFQQEAPERASSVYTRTTGEQEISVGL.

Residues 1–30 are Extracellular-facing; it reads MDYQVSSPTYDIDYYTSEPCQKINVKQIAA. Sulfotyrosine is present on Tyr3. O-linked (GalNAc...) serine glycosylation is found at Ser6 and Ser7. Sulfotyrosine is present on residues Tyr10, Tyr14, and Tyr15. 2 cysteine pairs are disulfide-bonded: Cys20-Cys269 and Cys101-Cys178. Residues 31-58 traverse the membrane as a helical segment; the sequence is RLLPPLYSLVFIFGFVGNILVVLILINC. At 59–68 the chain is on the cytoplasmic side; the sequence is KRLKSMTDIY. A helical membrane pass occupies residues 69–89; the sequence is LLNLAISDLLFLLTVPFWAHY. Residues 90–102 are Extracellular-facing; the sequence is AAAQWDFGNIMCQ. Residues 103–124 form a helical membrane-spanning segment; the sequence is LLTGLYFIGFFSGIFFIILLTI. Topologically, residues 125–141 are cytoplasmic; it reads DRYLAIVHAVFALKART. A helical membrane pass occupies residues 142-166; sequence VTFGVVTSVITWVVAVFASLPGIIF. The Extracellular segment spans residues 167-198; sequence TRSQREGLHYTCSSHFPYSQYQFWKNFRTLKI. The chain crosses the membrane as a helical span at residues 199 to 218; it reads VILGLVLPLLVMVICYSGIL. Over 219 to 235 the chain is Cytoplasmic; that stretch reads KTLLRCRNEKKRHRAVR. A helical transmembrane segment spans residues 236-260; it reads LIFTIMIVYFLFWAPYNIVLLLNTF. The Extracellular portion of the chain corresponds to 261–277; sequence QEFFGLNNCSSSNRLDQ. The chain crosses the membrane as a helical span at residues 278 to 301; sequence AMQVTETLGMTHCCINPIIYAFVG. The Cytoplasmic portion of the chain corresponds to 302–352; it reads EKFRNYLLVFFQKHIAKRFCKCCSIFQQEAPERASSVYTRTTGEQEISVGL. 3 S-palmitoyl cysteine lipidation sites follow: Cys321, Cys323, and Cys324. Residues Ser336, Ser337, and Ser349 each carry the phosphoserine; by BARK1 modification.

The protein belongs to the G-protein coupled receptor 1 family. In terms of assembly, interacts with PRAF2. Efficient ligand binding to CCL3/MIP-1alpha and CCL4/MIP-1beta requires sulfation, O-glycosylation and sialic acid modifications. Glycosylation on Ser-6 is required for efficient binding of CCL4. Interacts with GRK2. Interacts with ARRB1 and ARRB2. Interacts with CNIH4. Interacts with S100A4; this interaction stimulates T-lymphocyte chemotaxis. Post-translationally, sulfated on at least 2 of the N-terminal tyrosines. Sulfation is required for efficient binding of the chemokines, CCL3 and CCL4. In terms of processing, palmitoylation in the C-terminal is important for cell surface expression. Phosphorylation on serine residues in the C-terminal is stimulated by binding CC chemokines especially by APO-RANTES. Post-translationally, O-glycosylated, but not N-glycosylated. Ser-6 appears to be the major site even if Ser-7 may be also O-glycosylated. Also sialylated glycans present which contribute to chemokine binding. Thr-16 and Ser-17 may also be glycosylated and, if so, with small moieties such as a T-antigen.

It is found in the cell membrane. In terms of biological role, receptor for a number of inflammatory CC-chemokines including CCL3/MIP-1-alpha, CCL4/MIP-1-beta and RANTES and subsequently transduces a signal by increasing the intracellular calcium ion level. May play a role in the control of granulocytic lineage proliferation or differentiation. Participates in T-lymphocyte migration to the infection site by acting as a chemotactic receptor. The protein is C-C chemokine receptor type 5 (CCR5) of Mandrillus leucophaeus (Drill).